The sequence spans 445 residues: Phosphoglucosamine mutase (445 aa).

Ser-102 functions as the Phosphoserine intermediate in the catalytic mechanism. Mg(2+) contacts are provided by Ser-102, Asp-241, Asp-243, and Asp-245. Ser-102 carries the phosphoserine modification.

It belongs to the phosphohexose mutase family. The cofactor is Mg(2+). Post-translationally, activated by phosphorylation.

It carries out the reaction alpha-D-glucosamine 1-phosphate = D-glucosamine 6-phosphate. Functionally, catalyzes the conversion of glucosamine-6-phosphate to glucosamine-1-phosphate. This Haemophilus influenzae (strain 86-028NP) protein is Phosphoglucosamine mutase.